Consider the following 55-residue polypeptide: Large ribosomal subunit protein uL30 (55 aa).

The protein belongs to the universal ribosomal protein uL30 family. In terms of assembly, part of the 50S ribosomal subunit.

Binds the 5S and 23S rRNAs. This is Large ribosomal subunit protein uL30 from Deinococcus radiodurans (strain ATCC 13939 / DSM 20539 / JCM 16871 / CCUG 27074 / LMG 4051 / NBRC 15346 / NCIMB 9279 / VKM B-1422 / R1).